The sequence spans 894 residues: Leucine--tRNA ligase, mitochondrial (894 aa).

Residues 1–9 (MLPRPSSRF) constitute a mitochondrion transit peptide. A 'HIGH' region motif is present at residues 56 to 66 (PYPSGVLHIGH). The 'KMSKS' region motif lies at 646-650 (KMSKS). Lysine 649 serves as a coordination point for ATP.

Belongs to the class-I aminoacyl-tRNA synthetase family.

It localises to the mitochondrion matrix. The enzyme catalyses tRNA(Leu) + L-leucine + ATP = L-leucyl-tRNA(Leu) + AMP + diphosphate. The chain is Leucine--tRNA ligase, mitochondrial (NAM2) from Saccharomyces paradoxus (Yeast).